Here is a 364-residue protein sequence, read N- to C-terminus: MFWGIEISKVPVKFTPAFDLHITTACLSAVAKDTGRNVLQVKYDGKTYSLCSLKLNATEHSVLDTNFEEGKEVEFSVSGNNTICLTGYFVDSMFGDDEHGEDEDNEEEEGEEGEDEEMEGEDEDEDEEDEDEEDEDEEEEDDEEDDEINKELERQILEQALKRKAQIEADKNKQQKKPKQEEPVKQVTPVKPTAQAAKPTAATTTTTTTTTTTPTKQTTPAKPAAKPVTPTKPVTPTKPVEAAVVEKKKPTSSVVTLPSGLQYEDLVVGSGPSPKSGKKVGVKYIGKLTNGKTFDSSLRTPFTFRIGIREVIRGWDIGVASMKVGGKRRLTIPADLAYGRSGAPPSIPPNATLIFDVELVSCAQ.

2 disordered regions span residues Ser92–Ile148 and Glu168–Pro239. Residues Phe94–Ile148 are compositionally biased toward acidic residues. Over residues Glu168 to Val184 the composition is skewed to basic and acidic residues. Residues Lys185–Pro239 are compositionally biased toward low complexity. Positions Gly277–Ala363 constitute a PPIase FKBP-type domain.

Belongs to the FKBP-type PPIase family. Binds to histones H3 and H4.

It is found in the nucleus. It catalyses the reaction [protein]-peptidylproline (omega=180) = [protein]-peptidylproline (omega=0). Its activity is regulated as follows. Inhibited by both FK506 and rapamycin. In terms of biological role, PPIase that acts as a histone chaperone. Histone proline isomerase that increases the rate of cis-trans isomerization at prolines on the histone H3 N-terminal tail. Proline isomerization influences H3 methylation thereby regulating gene expression. This is FK506-binding protein 4 (fkbp4) from Dictyostelium discoideum (Social amoeba).